A 539-amino-acid chain; its full sequence is MMTSRLPSCFGLRFYAKRAATIRAKPSKLASSVGIGAKRSKKTVKKKGKEVDIFNYGKYVGLKERDPGSETKGKELLDKLSSFDQLKILPEVRNSIKNIIKDETLSKKAKESEDVIPSPIQLIAMKKLSRTLMDPKLQHHAIAAETGSGKTMAYLIPLFDYLKRQETEFPEDWEFMQDKAIIRSVIFLPTHELVDQVYNTVKKTENDLKFHVYKWDSGTKYPEIVEKLKNRIDILITTPAKLLNLFNIRMISRADRLLSEVKFVVLDEADTLLDKSWVEDTHRAIRSLPNTNHLLFCSATIPNDFNDTLERLFPNTIPITTPRLHKLPKSVDFKIIDSSINPFKGSKIKALAQTLYAIANDSSEPGFEKRCIVFTNEKKDVPYIVEKLKVTYGHDCIGLTSNDSVEERLEKIHDFITPPKPITMKKETPKIENEDSVEVEGSNITIGDFSSKTSVKNSNSESSLKVLVSTDLMARGLNFQGVRNLVLYDVPQTSIDLIHRVGRTARMQQRGRVFMITDKKTKSWAKALPKVIKKNMTLK.

The N-terminal 24 residues, 1 to 24 (MMTSRLPSCFGLRFYAKRAATIRA), are a transit peptide targeting the mitochondrion. Positions 81-109 (SSFDQLKILPEVRNSIKNIIKDETLSKKA) match the Q motif motif. Residues 131 to 319 (TLMDPKLQHH…ERLFPNTIPI (189 aa)) form the Helicase ATP-binding domain. Residue 144-151 (AETGSGKT) participates in ATP binding. A DEAD box motif is present at residues 267-270 (DEAD). Residues 350-539 (ALAQTLYAIA…KVIKKNMTLK (190 aa)) form the Helicase C-terminal domain.

Belongs to the DEAD box helicase family. MRH4 subfamily.

The protein resides in the mitochondrion. The enzyme catalyses ATP + H2O = ADP + phosphate + H(+). Functionally, ATP-binding RNA helicase involved in mitochondrial RNA metabolism. Required for maintenance of mitochondrial DNA. This Vanderwaltozyma polyspora (strain ATCC 22028 / DSM 70294 / BCRC 21397 / CBS 2163 / NBRC 10782 / NRRL Y-8283 / UCD 57-17) (Kluyveromyces polysporus) protein is ATP-dependent RNA helicase MRH4, mitochondrial (MRH4).